We begin with the raw amino-acid sequence, 341 residues long: MTEQRPIAVLGGGSFGTAVANLLAENGHAVRQWMRDPEQAEAIRVHRENPRYLKGIKIHPAVEPVTDLLETLTACDLCFVALPSSALRSVLAPHAERLAGKLLVSLTKGIEAQTFKLMSEILEEIAPQARIGVLSGPNLAREVAEHALTATVVASEDEELCERVQAVLHGRTFRVYASSDRFGVELGGALKNVYAIIAGMAVALGMGENTKSMLITRALAEMTRFAVNQGANPMTFLGLAGVGDLIVTCSSPKSRNYQVGFALGQGLSLEDAVTRLGEVAEGVNTLKVLKAKAQEVGVYMPLVAGLHAILFEGRTLNQVIELLMRAEPKTDVDFISTSGFN.

NADPH contacts are provided by Ser14, Phe15, Arg35, and Lys108. Sn-glycerol 3-phosphate contacts are provided by Lys108 and Gly136. An NADPH-binding site is contributed by Ala140. Sn-glycerol 3-phosphate-binding residues include Lys191, Asp244, Ser254, Arg255, and Asn256. Residue Lys191 is the Proton acceptor of the active site. Residue Arg255 participates in NADPH binding. NADPH is bound by residues Val279 and Glu281.

The protein belongs to the NAD-dependent glycerol-3-phosphate dehydrogenase family.

The protein localises to the cytoplasm. It carries out the reaction sn-glycerol 3-phosphate + NAD(+) = dihydroxyacetone phosphate + NADH + H(+). The enzyme catalyses sn-glycerol 3-phosphate + NADP(+) = dihydroxyacetone phosphate + NADPH + H(+). The protein operates within membrane lipid metabolism; glycerophospholipid metabolism. In terms of biological role, catalyzes the reduction of the glycolytic intermediate dihydroxyacetone phosphate (DHAP) to sn-glycerol 3-phosphate (G3P), the key precursor for phospholipid synthesis. The sequence is that of Glycerol-3-phosphate dehydrogenase [NAD(P)+] from Pseudomonas fluorescens (strain SBW25).